A 251-amino-acid chain; its full sequence is Fibroblast growth factor 23 (251 aa).

An N-terminal signal peptide occupies residues 1–24; that stretch reads MLGARLRLWVCALCSVCSMSVLRA. A disulfide bridge links cysteine 95 with cysteine 113. Residues threonine 171 and threonine 178 are each glycosylated (O-linked (GalNAc) threonine). The disordered stretch occupies residues 172 to 221; that stretch reads PIPRRHTRSAEDDSERDPLNVLKPRARMTPAPASCSQELPSAEDNSPMAS. The residue at position 180 (serine 180) is a Phosphoserine; by FAM20C. A compositionally biased stretch (polar residues) spans 205–219; that stretch reads SCSQELPSAEDNSPM.

Belongs to the heparin-binding growth factors family. In terms of assembly, interacts with FGFR1, FGFR2, FGFR3 and FGFR4. Affinity between fibroblast growth factors (FGFs) and their receptors is increased by KL and heparan sulfate glycosaminoglycans that function as coreceptors. Post-translationally, following secretion this protein is inactivated by cleavage into a N-terminal fragment and a C-terminal fragment. The processing is effected by proprotein convertases. In terms of processing, O-glycosylated at Thr-171 and Thr-178 by GALNT3 and glycosylation of Thr-178 requires previous glycosylation at Thr171. Glycosylation is necessary for secretion; it blocks processing by proprotein convertases when the O-glycan is alpha 2,6-sialylated. Competition between proprotein convertase cleavage and block of cleavage by O-glycosylation determines the level of secreted active FGF23. Phosphorylation at Ser-180 mediated by FAM20C slows down glycosylation at Thr-178 notably. As to expression, expressed in osteogenic cells particularly during phases of active bone remodeling. In adult trabecular bone, expressed in osteocytes and flattened bone-lining cells (inactive osteoblasts).

The protein resides in the secreted. In terms of biological role, regulator of phosphate homeostasis. Inhibits renal tubular phosphate transport by reducing SLC34A1 levels. Up-regulates EGR1 expression in the presence of KL. Acts directly on the parathyroid to decrease PTH secretion. Regulator of vitamin-D metabolism. Negatively regulates osteoblast differentiation and matrix mineralization. The sequence is that of Fibroblast growth factor 23 (FGF23) from Homo sapiens (Human).